The sequence spans 211 residues: Phosphatidylglycerophosphatase C (211 aa).

Residues methionine 1–arginine 33 lie on the Cytoplasmic side of the membrane. The helical transmembrane segment at glutamine 34–isoleucine 54 threads the bilayer. At lysine 55–glutamate 211 the chain is on the periplasmic side.

The cofactor is Mg(2+).

The protein localises to the cell inner membrane. It carries out the reaction a 1,2-diacyl-sn-glycero-3-phospho-(1'-sn-glycero-3'-phosphate) + H2O = a 1,2-diacyl-sn-glycero-3-phospho-(1'-sn-glycerol) + phosphate. Its pathway is phospholipid metabolism; phosphatidylglycerol biosynthesis; phosphatidylglycerol from CDP-diacylglycerol: step 2/2. In terms of biological role, lipid phosphatase which dephosphorylates phosphatidylglycerophosphate (PGP) to phosphatidylglycerol (PG). In Escherichia coli (strain K12), this protein is Phosphatidylglycerophosphatase C (pgpC).